Reading from the N-terminus, the 692-residue chain is MSNISWYRHCSVRLQLVTLALFLLLGSASLGSAHIDEEFEDDVTTTISSIASPMRRTYTNEWAVRIAGGKVEEANRLANKYGYTNLGPIIPGDEYYLFRDDRKKSRSSRKTRSLSANQLQHEEDVMWMEQQVAKRRVKRGYRRIRRHTDDNDIFEEDDDGTQISKSRNRKHPDPNDPLWTDMWYLNRGEHHSDSTTRMDHNVKEAWDLGYTGKGVVVTILDDGLERTHPDISPNYDERASYDVNDRDNDPMPRYEFSDENRHGTRCAGEVAAIFNNSLCIVGIAYNANIGGIRMLDGDVTDAVEAASVGHNADYIDIYSASWGPDDDGRTVDGPAKLTRSAFEKGITMGRKGKGSIFVWASGNGGKDADSCNCDGYTNSIYTLSISSATENGNIPWYSEACSSTLATTYSSGATGEKMILTTDLHHACTNMHTGTSASAPLAAGIVALALEANPNLTWRDLQHIVIRTAKPINLRAGDWTTNGVGRNVSHSFGYGLMDAGAMVKLAKIWKKVDEQHRCRQFYPSRYKNIPNGNRLQLQLYSDGCYGGADENKVSYVEHVQAIVTLKAPKRGDLQIYLTSPSGTKSTLLTKRARDTSRSGFTDWAFMTTHNWGEQAAGLWILEIDNDGWDDAELVKWELVLYGTDRETGDFGGQHASPLAVRSVQMEATSSGTQYSIFHVITLVILTFSQILY.

Residues 1 to 33 (MSNISWYRHCSVRLQLVTLALFLLLGSASLGSA) form the signal peptide. The N-linked (GlcNAc...) asparagine glycan is linked to Asn3. Residues 34 to 139 (HIDEEFEDDV…QQVAKRRVKR (106 aa)) constitute a propeptide that is removed on maturation. Residues 140–670 (GYRRIRRHTD…RSVQMEATSS (531 aa)) lie on the Lumenal side of the membrane. Residues 152-177 (DIFEEDDDGTQISKSRNRKHPDPNDP) are disordered. Asp176 contacts Ca(2+). The Peptidase S8 domain occupies 182–503 (MWYLNRGEHH…YGLMDAGAMV (322 aa)). The Charge relay system role is filled by Asp221. Asp222 is a substrate binding site. Residues Asp230, Asp242, Asp247, and Asp249 each coordinate Ca(2+). Positions 230 to 249 (DISPNYDERASYDVNDRDND) are disordered. 259–260 (EN) provides a ligand contact to substrate. The Charge relay system role is filled by His262. Ile273 is a binding site for Ca(2+). Asn275 is a glycosylation site (N-linked (GlcNAc...) asparagine). 3 residues coordinate Ca(2+): Asn276, Leu278, and Ile280. 2 disulfides stabilise this stretch: Cys279–Cys428 and Cys371–Cys401. Substrate-binding positions include Glu304, 321 to 326 (SWGPDD), Asp332, and 360 to 363 (ASGN). Asp326 provides a ligand contact to Ca(2+). Residue Asp369 participates in Ca(2+) binding. Residues Asp374 and Tyr376 each coordinate substrate. Residue Glu399 coordinates Ca(2+). Ser436 functions as the Charge relay system in the catalytic mechanism. A substrate-binding site is contributed by Ser436. Residues Asn455 and Asn487 are each glycosylated (N-linked (GlcNAc...) asparagine). Residues 512 to 646 (VDEQHRCRQF…ELVLYGTDRE (135 aa)) form the P/Homo B domain. A disulfide bond links Cys518 and Cys544. A Cell attachment site motif is present at residues 570–572 (RGD). Residues 671 to 692 (GTQYSIFHVITLVILTFSQILY) form a helical membrane-spanning segment.

This sequence belongs to the peptidase S8 family. Furin subfamily. As to quaternary structure, interacts (via extracellular domain) with receptor dma-1 (via extracellular domain); the interaction promotes dma-1 internalization. Ca(2+) is required as a cofactor. In terms of tissue distribution, expressed in the nervous system including the ventral nerve cord, the nerve ring and the retrovesicular ganglion, and in epithelial cells. Expressed in IL2 neurons. Expressed in PVD mechanosensory neurons. Expressed in pharynx with strong expression in the g2 pharyngeal gland cells and vpi pharyngeal intestinal valve cells. Expressed in intestine.

The protein localises to the cell membrane. It localises to the perikaryon. The protein resides in the cell projection. It is found in the axon. Furin-like protease which cleaves proproteins at the RX(K/R)R consensus motif. During neuronal development, regulates the formation and extension of dendrite branches and cellular positioning of various type of neurons. Together with chin-1 and cdc-42, plays a role in the development of the neuropil and is required for the guidance of axons from neurons, including SubL pioneer neurons and AIY interneurons, into the nerve ring. Its role in axon guidance in glia and pioneer neurons may be through ensuring the fmi-1 protein is correctly localized to the nerve ring. Promotes the formation, extension and self-avoidance of dendritic branches of PVD and FLP mechanosensory neurons. In PVD neurons, regulates plasma membrane levels of branching receptor dma-1 by targeting it to late endosomes and thus promotes normal dendrite branching and dendrite self-avoidance. Also controls dendrite extension in AIY and D-type motoneurons, dendrite branching in AQR sensory neurons and VC4/5 motoneurons, the normal number of dendritic branches in AVL neurons and the positioning of HSN and ALM/PLM neurons. Dispensable for maintaining dendrite branching in adults. Also regulates dauer-specific dendritic branching of IL2 neurons and dauer-specific nictation behavior. Under adverse environmental conditions, may promote dauer formation by processing insulin-like proteins ins-1 and ins-18, two daf-2/InsR antagonists. The polypeptide is Furin-like protease kpc-1 (Caenorhabditis elegans).